Reading from the N-terminus, the 129-residue chain is Large ribosomal subunit protein bL17 (129 aa).

Belongs to the bacterial ribosomal protein bL17 family. Part of the 50S ribosomal subunit. Contacts protein L32.

The sequence is that of Large ribosomal subunit protein bL17 from Pasteurella multocida (strain Pm70).